The sequence spans 612 residues: Dihydroxy-acid dehydratase (612 aa).

Asp-81 provides a ligand contact to Mg(2+). [2Fe-2S] cluster is bound at residue Cys-122. Asp-123 and Lys-124 together coordinate Mg(2+). N6-carboxylysine is present on Lys-124. Cys-195 provides a ligand contact to [2Fe-2S] cluster. Glu-491 is a Mg(2+) binding site. Ser-517 acts as the Proton acceptor in catalysis.

It belongs to the IlvD/Edd family. In terms of assembly, homodimer. Requires [2Fe-2S] cluster as cofactor. Mg(2+) is required as a cofactor.

It catalyses the reaction (2R)-2,3-dihydroxy-3-methylbutanoate = 3-methyl-2-oxobutanoate + H2O. It carries out the reaction (2R,3R)-2,3-dihydroxy-3-methylpentanoate = (S)-3-methyl-2-oxopentanoate + H2O. It participates in amino-acid biosynthesis; L-isoleucine biosynthesis; L-isoleucine from 2-oxobutanoate: step 3/4. The protein operates within amino-acid biosynthesis; L-valine biosynthesis; L-valine from pyruvate: step 3/4. In terms of biological role, functions in the biosynthesis of branched-chain amino acids. Catalyzes the dehydration of (2R,3R)-2,3-dihydroxy-3-methylpentanoate (2,3-dihydroxy-3-methylvalerate) into 2-oxo-3-methylpentanoate (2-oxo-3-methylvalerate) and of (2R)-2,3-dihydroxy-3-methylbutanoate (2,3-dihydroxyisovalerate) into 2-oxo-3-methylbutanoate (2-oxoisovalerate), the penultimate precursor to L-isoleucine and L-valine, respectively. The protein is Dihydroxy-acid dehydratase of Sinorhizobium medicae (strain WSM419) (Ensifer medicae).